We begin with the raw amino-acid sequence, 885 residues long: Glycerol-3-phosphate acyltransferase (885 aa).

Residues 1 to 17 are compositionally biased toward pro residues; it reads MPEQNPLPFPDGQPSPP. A disordered region spans residues 1–26; that stretch reads MPEQNPLPFPDGQPSPPSTAAADTGA. The HXXXXD motif signature appears at 362 to 367; the sequence is HRSHMD.

It belongs to the GPAT/DAPAT family.

It localises to the cell inner membrane. It catalyses the reaction sn-glycerol 3-phosphate + an acyl-CoA = a 1-acyl-sn-glycero-3-phosphate + CoA. The protein operates within phospholipid metabolism; CDP-diacylglycerol biosynthesis; CDP-diacylglycerol from sn-glycerol 3-phosphate: step 1/3. The polypeptide is Glycerol-3-phosphate acyltransferase (Xanthomonas axonopodis pv. citri (strain 306)).